Here is a 446-residue protein sequence, read N- to C-terminus: Adenylosuccinate synthetase (446 aa).

GTP is bound by residues 21–27 (GDEGKGK) and 49–51 (GHT). Asp-22 (proton acceptor) is an active-site residue. Asp-22 and Gly-49 together coordinate Mg(2+). IMP is bound by residues 22-25 (DEGK), 47-50 (NAGH), Thr-141, Arg-155, Gln-236, Thr-251, and Arg-319. The active-site Proton donor is His-50. 315 to 321 (VTTGRSR) lines the substrate pocket. Residues Arg-321, 347–349 (KLD), and 429–431 (STS) each bind GTP.

This sequence belongs to the adenylosuccinate synthetase family. Homodimer. Requires Mg(2+) as cofactor.

It is found in the cytoplasm. The enzyme catalyses IMP + L-aspartate + GTP = N(6)-(1,2-dicarboxyethyl)-AMP + GDP + phosphate + 2 H(+). The protein operates within purine metabolism; AMP biosynthesis via de novo pathway; AMP from IMP: step 1/2. Functionally, plays an important role in the de novo pathway of purine nucleotide biosynthesis. Catalyzes the first committed step in the biosynthesis of AMP from IMP. The polypeptide is Adenylosuccinate synthetase (Polaromonas naphthalenivorans (strain CJ2)).